The sequence spans 520 residues: Cobyric acid synthase (520 aa).

Residues 257–451 (WLTVAAVRLP…VHGLLESDGF (195 aa)) form the GATase cobBQ-type domain. The active-site Nucleophile is cysteine 338. Histidine 443 is a catalytic residue.

It belongs to the CobB/CobQ family. CobQ subfamily.

Its pathway is cofactor biosynthesis; adenosylcobalamin biosynthesis. Catalyzes amidations at positions B, D, E, and G on adenosylcobyrinic A,C-diamide. NH(2) groups are provided by glutamine, and one molecule of ATP is hydrogenolyzed for each amidation. The polypeptide is Cobyric acid synthase (Nocardia farcinica (strain IFM 10152)).